A 149-amino-acid chain; its full sequence is MVDVVSEGIPVQDVEEFTEKYKNRRKQQMMRFIGSTAVTLISCRLAITRAKARHYVPNMFQLNYKPPVVTYKGETGPALVLATGITVGTLSMLVSGSCWIWDISTMKEFREIKGFSSEKVEHPRLANMPLESDSMRNVYERLELLNGKK.

2 helical membrane passes run 29–48 and 79–101; these read MMRF…LAIT and LVLA…CWIW.

The protein belongs to the AIM11 family.

It localises to the membrane. The polypeptide is Altered inheritance of mitochondria protein 11 (AIM11) (Vanderwaltozyma polyspora (strain ATCC 22028 / DSM 70294 / BCRC 21397 / CBS 2163 / NBRC 10782 / NRRL Y-8283 / UCD 57-17) (Kluyveromyces polysporus)).